Here is a 664-residue protein sequence, read N- to C-terminus: DNA topoisomerase 4 subunit B (664 aa).

Residues Tyr-7, Asn-47, Asp-74, 114 to 120, and Lys-341 each bind ATP; that span reads GLHGVGA. The tract at residues 386–418 is disordered; sequence REAARKAREDARSGKKNKRKDTLLSGKLTPAQS. The segment covering 387-398 has biased composition (basic and acidic residues); that stretch reads EAARKAREDARS. The Toprim domain maps to 424-538; sequence NELYLVEGDS…AGRVFIALPP (115 aa). Residues Glu-430, Asp-503, and Asp-505 each coordinate Mg(2+).

Belongs to the type II topoisomerase family. ParE type 2 subfamily. Heterotetramer composed of ParC and ParE. The cofactor is Mg(2+). Mn(2+) is required as a cofactor. It depends on Ca(2+) as a cofactor.

It catalyses the reaction ATP-dependent breakage, passage and rejoining of double-stranded DNA.. Topoisomerase IV is essential for chromosome segregation. It relaxes supercoiled DNA. Performs the decatenation events required during the replication of a circular DNA molecule. The protein is DNA topoisomerase 4 subunit B of Staphylococcus epidermidis (strain ATCC 35984 / DSM 28319 / BCRC 17069 / CCUG 31568 / BM 3577 / RP62A).